The chain runs to 492 residues: Catalase-3 (492 aa).

Active-site residues include His65 and Asn138. Tyr348 provides a ligand contact to heme.

The protein belongs to the catalase family. In terms of assembly, homotetramer and heterotetramer. At least six or seven isozymes are produced from a mixture of 3 gene products. Interacts with NCA1. Interacts with LSD1. The cofactor is heme.

It is found in the peroxisome. The enzyme catalyses 2 H2O2 = O2 + 2 H2O. Its function is as follows. Occurs in almost all aerobically respiring organisms and serves to protect cells from the toxic effects of hydrogen peroxide. This chain is Catalase-3 (CAT3), found in Arabidopsis thaliana (Mouse-ear cress).